A 270-amino-acid chain; its full sequence is Small ribosomal subunit protein uS3 (270 aa).

Residues 38 to 106 (IRQMLTRGME…QVQLNILEVK (69 aa)) form the KH type-2 domain. Residues 212–270 (EREAAQAAQRAAGPQRRERPGRRRRGGGGGGGQQQQQAEKATAQATEAAKAAKSGNEGS) are disordered. 2 stretches are compositionally biased toward low complexity: residues 216 to 225 (AQAAQRAAGP) and 245 to 263 (QQQQ…AKAA).

Belongs to the universal ribosomal protein uS3 family. Part of the 30S ribosomal subunit. Forms a tight complex with proteins S10 and S14.

Binds the lower part of the 30S subunit head. Binds mRNA in the 70S ribosome, positioning it for translation. This is Small ribosomal subunit protein uS3 from Thermobifida fusca (strain YX).